The sequence spans 134 residues: uncharacterized protein (134 aa).

The N-terminal stretch at 1-37 (MSYIKRDHTALRDIAMKTFLKVVGLAASLSAASVAFS) is a signal peptide.

This is an uncharacterized protein from Coxiella burnetii (strain RSA 493 / Nine Mile phase I).